We begin with the raw amino-acid sequence, 244 residues long: 5-oxoprolinase subunit A (244 aa).

It belongs to the LamB/PxpA family. In terms of assembly, forms a complex composed of PxpA, PxpB and PxpC.

The enzyme catalyses 5-oxo-L-proline + ATP + 2 H2O = L-glutamate + ADP + phosphate + H(+). Its function is as follows. Catalyzes the cleavage of 5-oxoproline to form L-glutamate coupled to the hydrolysis of ATP to ADP and inorganic phosphate. The chain is 5-oxoprolinase subunit A from Salmonella typhi.